The chain runs to 547 residues: Phospholipase DDHD1 (547 aa).

Residue S184 is part of the active site. Positions 258–533 (LKFKVENFFC…ALFLLTFMYK (276 aa)) constitute a DDHD domain. The residue at position 370 (S370) is a Phosphoserine. The disordered stretch occupies residues 414–448 (RSSASQPSEPSKDSLEDDKKPSASPSTTTVATQTL). Residues 423–434 (PSKDSLEDDKKP) show a composition bias toward basic and acidic residues. Residues 435 to 448 (SASPSTTTVATQTL) show a composition bias toward low complexity.

This sequence belongs to the PA-PLA1 family. Forms homooligomers and, to a much smaller extent, heterooligomers with DDHD2. Interacts with SEC23A and SEC24C. As to expression, predominantly expressed in testis, in round and elongating spermatids, but not in spermatocytes (at protein level). Also expressed in the brain, and at lower levels in other tissues such as thymus and lung (at protein level).

The protein localises to the cytoplasm. The catalysed reaction is a 1,2-diacyl-sn-glycero-3-phosphate + H2O = a 2-acyl-sn-glycerol 3-phosphate + a fatty acid + H(+). It carries out the reaction a 1,2-diacyl-sn-glycero-3-phospho-(1D-myo-inositol) + H2O = a 2-acyl-sn-glycero-3-phospho-D-myo-inositol + a fatty acid + H(+). The enzyme catalyses 1-octadecanoyl-2-(5Z,8Z,11Z,14Z-eicosatetraenoyl)-sn-glycero-3-phospho-(1D-myo-inositol) + H2O = 2-(5Z,8Z,11Z,14Z-eicosatetraenoyl)-sn-glycero-3-phospho-(1D-myo-inositol) + octadecanoate + H(+). It catalyses the reaction a 1-acyl-2-(5Z,8Z,11Z,14Z-eicosatetraenoyl)-sn-glycero-3-phospho-(1D-myo-inositol) + H2O = 2-(5Z,8Z,11Z,14Z-eicosatetraenoyl)-sn-glycero-3-phospho-(1D-myo-inositol) + a fatty acid + H(+). The catalysed reaction is 1,2-dihexadecanoyl-sn-glycero-3-phospho-(1D-myo-inositol) + H2O = 2-hexadecanoyl-sn-glycero-3-phospho-(1D-myo-inositol) + hexadecanoate + H(+). It carries out the reaction a 1-acyl-2-(5Z,8Z,11Z,14Z)-eicosatetraenoyl-sn-glycero-3-phosphate + H2O = 2-(5Z,8Z,11Z,14Z-eicosatetraenoyl)-sn-glycero-3-phosphate + a fatty acid + H(+). The enzyme catalyses 1-(9Z-octadecenoyl)-2-(7Z,10Z,13Z,16Z,19Z-docosapentaenoyl)-sn-glycero-3-phospho-1D-myo-inositol + H2O = 2-(7Z,10Z,13Z,16Z,19Z-docosapentaenoyl)-sn-glycero-3-phospho-1D-myo-inositol + (9Z)-octadecenoate + H(+). It catalyses the reaction 1-(9Z-octadecenoyl)-2-(5Z,8Z,11Z,14Z-eicosatetraenoyl)-sn-glycero-3-phospho-1D-myo-inositol + H2O = 2-(5Z,8Z,11Z,14Z-eicosatetraenoyl)-sn-glycero-3-phospho-(1D-myo-inositol) + (9Z)-octadecenoate + H(+). The catalysed reaction is 1,2-di-(9Z-octadecenoyl)-sn-glycero-3-phospho-1D-myo-inositol + H2O = 2-(9Z-octadecenoyl)-sn-glycero-3-phospho-1D-myo-inositol + (9Z)-octadecenoate + H(+). It carries out the reaction 1-(9Z-octadecenoyl)-2-(8Z,11Z,14Z-eicosatrienoyl)-sn-glycero-3-phospho-1D-myo-inositol + H2O = 2-(8Z,11Z,14Z-eicosatrienoyl)-sn-glycero-3-phospho-1D-myo-inositol + (9Z)-octadecenoate + H(+). The enzyme catalyses 1,2-di-(9Z-octadecenoyl)-sn-glycero-3-phosphate + H2O = 2-(9Z-octadecenoyl)-sn-glycero-3-phosphate + (9Z)-octadecenoate + H(+). It catalyses the reaction 1-hexadecanoyl-2-(9Z-octadecenoyl)-sn-glycero-3-phosphate + H2O = 2-(9Z-octadecenoyl)-sn-glycero-3-phosphate + hexadecanoate + H(+). The catalysed reaction is 1-hexadecanoyl-2-(9Z-octadecenoyl)-sn-glycero-3-phospho-L-serine + H2O = 2-(9Z-octadecenoyl)-sn-glycero-3-phospho-L-serine + hexadecanoate + H(+). It carries out the reaction 1,2-di-(5Z,8Z,11Z,14Z)-eicosatetraenoyl-sn-glycero-3-phosphate + H2O = 2-(5Z,8Z,11Z,14Z-eicosatetraenoyl)-sn-glycero-3-phosphate + (5Z,8Z,11Z,14Z)-eicosatetraenoate + H(+). The enzyme catalyses 1-octadecanoyl-2-(5Z,8Z,11Z,14Z-eicosatetraenoyl)-sn-glycero-3-phosphate + H2O = 2-(5Z,8Z,11Z,14Z-eicosatetraenoyl)-sn-glycero-3-phosphate + octadecanoate + H(+). It catalyses the reaction a 1,2-diacyl-sn-glycero-3-phospho-L-serine + H2O = a 2-acyl-sn-glycero-3-phospho-L-serine + a fatty acid + H(+). The catalysed reaction is a 1,2-diacyl-sn-glycero-3-phosphocholine + H2O = a 2-acyl-sn-glycero-3-phosphocholine + a fatty acid + H(+). It carries out the reaction 1,2-di-(9Z-octadecenoyl)-sn-glycero-3-phosphocholine + H2O = (9Z-octadecenoyl)-sn-glycero-3-phosphocholine + (9Z)-octadecenoate + H(+). The enzyme catalyses a 1,2-diacyl-sn-glycero-3-phosphoethanolamine + H2O = a 2-acyl-sn-glycero-3-phosphoethanolamine + a fatty acid + H(+). It catalyses the reaction a 1,2-diacyl-sn-glycero-3-phospho-(1'-sn-glycerol) + H2O = 2-acyl-sn-glycero-3-phospho-(1'-sn-glycerol) + a fatty acid + H(+). The catalysed reaction is 1-hexadecanoyl-2-(9Z-octadecenoyl)-sn-glycero-3-phospho-(1'-sn-glycerol) + H2O = 2-(9Z-octadecenoyl)-sn-glycero-3-phospho-(1'-sn-glycerol) + hexadecanoate + H(+). It carries out the reaction 1-acyl-2-(5Z,8Z,11Z,14Z-eicosatetraenoyl)-sn-glycero-3-phosphocholine + H2O = 2-(5Z,8Z,11Z,14Z)-eicosatetraenoyl-sn-glycero-3-phosphocholine + a fatty acid + H(+). The enzyme catalyses 1-acyl-2-(5Z,8Z,11Z,14Z)-eicosatetraenoyl-sn-glycero-3-phosphoethanolamine + H2O = 2-(5Z,8Z,11Z,14Z)-eicosatetraenoyl-sn-glycero-3-phosphoethanolamine + a fatty acid + H(+). The protein operates within phospholipid metabolism; phosphatidylinositol metabolism. Its function is as follows. Phospholipase A1 (PLA1) that hydrolyzes ester bonds at the sn-1 position of glycerophospholipids producing a free fatty acid and a lysophospholipid. Prefers phosphatidate (1,2-diacyl-sn-glycero-3-phosphate, PA) as substrate in vitro, but can efficiently hydrolyze phosphatidylinositol (1,2-diacyl-sn-glycero-3-phospho-(1D-myo-inositol), PI), as well as a range of other glycerophospholipid substrates such as phosphatidylcholine (1,2-diacyl-sn-glycero-3-phosphocholine, PC), phosphatidylethanolamine (1,2-diacyl-sn-glycero-3-phosphoethanolamine, PE), phosphatidylserine (1,2-diacyl-sn-glycero-3-phospho-L-serine, PS) and phosphatidylglycerol (1,2-diacyl-sn-glycero-3-phospho-(1'-sn-glycerol), PG). Involved in the regulation of the endogenous content of polyunsaturated PI and PS lipids in the nervous system. Changes in these lipids extend to downstream metabolic products like PI phosphates PIP and PIP2, which play fundamental roles in cell biology. Regulates mitochondrial morphology. These dynamic changes may be due to PA hydrolysis at the mitochondrial surface. May play a regulatory role in spermatogenesis or sperm function. This chain is Phospholipase DDHD1, found in Mus musculus (Mouse).